A 136-amino-acid polypeptide reads, in one-letter code: Nucleoside diphosphate kinase (136 aa).

ATP-binding residues include K10, F58, R86, T92, R104, and N114. H117 functions as the Pros-phosphohistidine intermediate in the catalytic mechanism.

It belongs to the NDK family. As to quaternary structure, homotetramer. The cofactor is Mg(2+).

It localises to the cytoplasm. The catalysed reaction is a 2'-deoxyribonucleoside 5'-diphosphate + ATP = a 2'-deoxyribonucleoside 5'-triphosphate + ADP. The enzyme catalyses a ribonucleoside 5'-diphosphate + ATP = a ribonucleoside 5'-triphosphate + ADP. Functionally, major role in the synthesis of nucleoside triphosphates other than ATP. The ATP gamma phosphate is transferred to the NDP beta phosphate via a ping-pong mechanism, using a phosphorylated active-site intermediate. This is Nucleoside diphosphate kinase from Corynebacterium efficiens (strain DSM 44549 / YS-314 / AJ 12310 / JCM 11189 / NBRC 100395).